Consider the following 237-residue polypeptide: Probable GTP-binding protein EngB (237 aa).

The EngB-type G domain maps to 23-209 (AVPEVAFAGR…QAVIAGWLNL (187 aa)). GTP contacts are provided by residues 31–38 (GRSNAGKS), 58–62 (GRTQH), 82–85 (DLPG), 149–152 (TKAD), and 187–190 (LFSS). Residues Ser38 and Thr60 each contribute to the Mg(2+) site. Residues 214-237 (KAEREPAAANSVPPAVPPASDPAA) are disordered. A compositionally biased stretch (pro residues) spans 227-237 (PAVPPASDPAA).

Belongs to the TRAFAC class TrmE-Era-EngA-EngB-Septin-like GTPase superfamily. EngB GTPase family. Requires Mg(2+) as cofactor.

Necessary for normal cell division and for the maintenance of normal septation. The polypeptide is Probable GTP-binding protein EngB (Cupriavidus taiwanensis (strain DSM 17343 / BCRC 17206 / CCUG 44338 / CIP 107171 / LMG 19424 / R1) (Ralstonia taiwanensis (strain LMG 19424))).